Reading from the N-terminus, the 71-residue chain is Large ribosomal subunit protein uL29 (71 aa).

The protein belongs to the universal ribosomal protein uL29 family.

The sequence is that of Large ribosomal subunit protein uL29 from Roseiflexus sp. (strain RS-1).